Consider the following 292-residue polypeptide: Probable serine/threonine-protein kinase FPV226 (292 aa).

In terms of domain architecture, Protein kinase spans 14–292; it reads WKIDKLIGCG…DLLRQLVNSL (279 aa). ATP-binding positions include 20–28 and Lys43; that span reads IGCGGFGCV. Asp147 (proton acceptor) is an active-site residue.

The protein belongs to the protein kinase superfamily. Ser/Thr protein kinase family. Poxviruses subfamily.

It carries out the reaction L-seryl-[protein] + ATP = O-phospho-L-seryl-[protein] + ADP + H(+). It catalyses the reaction L-threonyl-[protein] + ATP = O-phospho-L-threonyl-[protein] + ADP + H(+). The polypeptide is Probable serine/threonine-protein kinase FPV226 (Vertebrata (FPV)).